Here is a 402-residue protein sequence, read N- to C-terminus: Propionate kinase (402 aa).

Residues N11 and K18 each coordinate ATP. N11 provides a ligand contact to Mg(2+). R86 provides a ligand contact to substrate. Residue D143 is the Proton donor/acceptor of the active site. ATP is bound by residues H175, 203 to 207, 278 to 280, and 326 to 330; these read HLGNG, DLR, and GIGEN.

This sequence belongs to the acetokinase family. TdcD subfamily. As to quaternary structure, homodimer. Mg(2+) serves as cofactor.

It carries out the reaction propanoate + ATP = propanoyl phosphate + ADP. Its pathway is amino-acid degradation; L-threonine degradation via propanoate pathway; propanoate from L-threonine: step 4/4. Catalyzes the conversion of propionyl phosphate and ADP to propionate and ATP. The polypeptide is Propionate kinase (Escherichia coli O6:H1 (strain CFT073 / ATCC 700928 / UPEC)).